The sequence spans 622 residues: DNA mismatch repair protein MutL (622 aa).

It belongs to the DNA mismatch repair MutL/HexB family.

Functionally, this protein is involved in the repair of mismatches in DNA. It is required for dam-dependent methyl-directed DNA mismatch repair. May act as a 'molecular matchmaker', a protein that promotes the formation of a stable complex between two or more DNA-binding proteins in an ATP-dependent manner without itself being part of a final effector complex. The protein is DNA mismatch repair protein MutL of Clostridium acetobutylicum (strain ATCC 824 / DSM 792 / JCM 1419 / IAM 19013 / LMG 5710 / NBRC 13948 / NRRL B-527 / VKM B-1787 / 2291 / W).